The sequence spans 233 residues: ATP-dependent Clp protease proteolytic subunit 2 (233 aa).

Residue Ser-116 is the Nucleophile of the active site. His-141 is an active-site residue. Positions 214-233 (EGLKSIQPNGEAADDSEDDA) are disordered.

It belongs to the peptidase S14 family. As to quaternary structure, fourteen ClpP subunits assemble into 2 heptameric rings which stack back to back to give a disk-like structure with a central cavity, resembling the structure of eukaryotic proteasomes.

It is found in the cytoplasm. It carries out the reaction Hydrolysis of proteins to small peptides in the presence of ATP and magnesium. alpha-casein is the usual test substrate. In the absence of ATP, only oligopeptides shorter than five residues are hydrolyzed (such as succinyl-Leu-Tyr-|-NHMec, and Leu-Tyr-Leu-|-Tyr-Trp, in which cleavage of the -Tyr-|-Leu- and -Tyr-|-Trp bonds also occurs).. Its function is as follows. Cleaves peptides in various proteins in a process that requires ATP hydrolysis. Has a chymotrypsin-like activity. Plays a major role in the degradation of misfolded proteins. The chain is ATP-dependent Clp protease proteolytic subunit 2 from Salinibacter ruber (strain DSM 13855 / M31).